The sequence spans 930 residues: Kinesin-like protein KIN-7J (930 aa).

The 265-residue stretch at 9 to 273 folds into the Kinesin motor domain; that stretch reads KILVSVRVRP…TLGTVIRKLR (265 aa). An ATP-binding site is contributed by 95 to 102; the sequence is GQTSSGKT. Disordered regions lie at residues 449–569 and 655–686; these read LKNS…IGTD and MQTK…SLKD. Positions 459–468 are enriched in low complexity; sequence SVEAQESQES. Composition is skewed to basic and acidic residues over residues 473–482 and 533–558; these read EQMKNEERKM and AKLD…KDCN. Low complexity predominate over residues 666–681; the sequence is TSSISFDSGSSTSIDT. Lysine 805 is covalently cross-linked (Glycyl lysine isopeptide (Lys-Gly) (interchain with G-Cter in ubiquitin)).

It belongs to the TRAFAC class myosin-kinesin ATPase superfamily. Kinesin family. KIN-7 subfamily.

The polypeptide is Kinesin-like protein KIN-7J (Arabidopsis thaliana (Mouse-ear cress)).